The primary structure comprises 83 residues: Cytochrome b559 subunit alpha (83 aa).

The chain crosses the membrane as a helical span at residues 21–35 (VIHSITIPSLFIAGW). A heme-binding site is contributed by H23.

It belongs to the PsbE/PsbF family. In terms of assembly, heterodimer of an alpha subunit and a beta subunit. PSII is composed of 1 copy each of membrane proteins PsbA, PsbB, PsbC, PsbD, PsbE, PsbF, PsbH, PsbI, PsbJ, PsbK, PsbL, PsbM, PsbT, PsbX, PsbY, PsbZ, Psb30/Ycf12, at least 3 peripheral proteins of the oxygen-evolving complex and a large number of cofactors. It forms dimeric complexes. Heme b is required as a cofactor.

It localises to the plastid. The protein localises to the chloroplast thylakoid membrane. Its function is as follows. This b-type cytochrome is tightly associated with the reaction center of photosystem II (PSII). PSII is a light-driven water:plastoquinone oxidoreductase that uses light energy to abstract electrons from H(2)O, generating O(2) and a proton gradient subsequently used for ATP formation. It consists of a core antenna complex that captures photons, and an electron transfer chain that converts photonic excitation into a charge separation. This is Cytochrome b559 subunit alpha from Chaetosphaeridium globosum (Charophycean green alga).